A 388-amino-acid chain; its full sequence is MNLHEYQAKALLKEYGMPVQEGILATNADEAVAAFEQLGGKFAVMKAQVHAGGRGKAGGVKVAKSKEDVIEFANNIIRTRLVTYQTDANGQPVNSIIVAEDVYPVERELYLGAVVDRSSRRITFMASTEGGVEIEKVAEETPEKIIKVEVDPLVGLQPFQAREVAFALGLKDKQIGQFVKIMTAAYQAFVENDFALFEINPLSVRENGEILCVDAKVGIDSNALYRLPKVAALRDKSQENERELKASEFDLNYVALEGNIGCMVNGAGLAMATMDIIKLYGGQPANFLDVGGGATKERVIEAFKIILADTSVQGVLINIFGGIVRCDMIAEAIIAAVQEVNVTVPVVVRLEGNNAELGAKLLDESGLKLISANGLSDAAEKVVAAVKA.

The ATP-grasp domain maps to 9–245 (KALLKEYGMP…KSQENERELK (237 aa)). Residues lysine 46, 53–55 (GRG), glutamate 100, tyrosine 103, and glutamate 108 contribute to the ATP site. Mg(2+) is bound by residues asparagine 200 and aspartate 214. Substrate is bound by residues asparagine 265 and 322–324 (GIV).

Belongs to the succinate/malate CoA ligase beta subunit family. In terms of assembly, heterotetramer of two alpha and two beta subunits. Mg(2+) serves as cofactor.

The enzyme catalyses succinate + ATP + CoA = succinyl-CoA + ADP + phosphate. It catalyses the reaction GTP + succinate + CoA = succinyl-CoA + GDP + phosphate. Its pathway is carbohydrate metabolism; tricarboxylic acid cycle; succinate from succinyl-CoA (ligase route): step 1/1. Its function is as follows. Succinyl-CoA synthetase functions in the citric acid cycle (TCA), coupling the hydrolysis of succinyl-CoA to the synthesis of either ATP or GTP and thus represents the only step of substrate-level phosphorylation in the TCA. The beta subunit provides nucleotide specificity of the enzyme and binds the substrate succinate, while the binding sites for coenzyme A and phosphate are found in the alpha subunit. The sequence is that of Succinate--CoA ligase [ADP-forming] subunit beta from Acinetobacter baumannii (strain SDF).